Reading from the N-terminus, the 167-residue chain is Menaquinol:cytochrome c reductase iron-sulfur subunit (167 aa).

The 100-residue stretch at 59–158 (TKEPQRFDFK…QEVKDGFLYL (100 aa)) folds into the Rieske domain. Residues Cys100, His102, Cys121, and His124 each coordinate [2Fe-2S] cluster. Cys105 and Cys123 are joined by a disulfide.

The protein belongs to the Rieske iron-sulfur protein family. The main subunits of the menaquinol:cytochrome c complex are a Rieske-type iron-sulfur protein (QcrA), a cytochrome b (QcrB) and a cytochrome c (QcrC). It depends on [2Fe-2S] cluster as a cofactor.

Functionally, component of the menaquinol:cytochrome c reductase complex. The Rieske protein is a high potential 2Fe-2S protein. This Bacillus subtilis (strain 168) protein is Menaquinol:cytochrome c reductase iron-sulfur subunit (qcrA).